A 175-amino-acid chain; its full sequence is Inorganic pyrophosphatase 1 (175 aa).

The substrate site is built by K30, R44, and Y56. Mg(2+)-binding residues include D66, D71, and D103. Residue Y142 coordinates substrate.

The protein belongs to the PPase family. In terms of assembly, homohexamer. Mg(2+) is required as a cofactor.

It localises to the cytoplasm. The catalysed reaction is diphosphate + H2O = 2 phosphate + H(+). In terms of biological role, catalyzes the hydrolysis of inorganic pyrophosphate (PPi) forming two phosphate ions. The chain is Inorganic pyrophosphatase 1 from Pseudomonas syringae pv. tomato (strain ATCC BAA-871 / DC3000).